A 226-amino-acid polypeptide reads, in one-letter code: AN1-type zinc finger protein 3 homolog (226 aa).

The A20-type zinc-finger motif lies at 12-44; that stretch reads PSLPPRCPCGFWGSSKTMNLCSKCFADFQKKQP. 4 residues coordinate Zn(2+): Cys-18, Cys-20, Cys-32, and Cys-35. Positions 42–149 are disordered; the sequence is KQPDEDTAPS…DRPDNSSRSK (108 aa). 3 stretches are compositionally biased toward polar residues: residues 49 to 59, 67 to 92, and 105 to 114; these read APSTSSSQSDL, DNGNTSIPTPTVNPTQQLPTELNVDS, and AHVSLTTPSK. The span at 134–146 shows a compositional bias: basic and acidic residues; the sequence is RLLDSGDRPDNSS. The segment at 150–199 adopts an AN1-type zinc-finger fold; the sequence is QKSRRRCFRCQIKLELVQQELGSCRCGYVFCMLHRLPEQHDCTFDHMGRG. Zn(2+) is bound by residues Cys-156, Cys-159, Cys-173, Cys-175, Cys-180, His-183, His-189, and Cys-191.

This chain is AN1-type zinc finger protein 3 homolog (zfand3), found in Xenopus laevis (African clawed frog).